Reading from the N-terminus, the 444-residue chain is L-cysteine:1D-myo-inositol 2-amino-2-deoxy-alpha-D-glucopyranoside ligase (444 aa).

C66 is a Zn(2+) binding site. Residues 66–69 (CGIT), T81, and 104–106 (NVT) contribute to the L-cysteinyl-5'-AMP site. A 'HIGH' region motif is present at residues 68 to 78 (ITPYDATHLGH). The 'ERGGDP' region motif lies at 206–211 (EHGGDP). Residue W246 participates in L-cysteinyl-5'-AMP binding. A Zn(2+)-binding site is contributed by C250. Position 268 to 270 (268 to 270 (GSD)) interacts with L-cysteinyl-5'-AMP. H275 contributes to the Zn(2+) binding site. Position 302 (V302) interacts with L-cysteinyl-5'-AMP. The short motif at 308-312 (KMSKS) is the 'KMSKS' region element.

This sequence belongs to the class-I aminoacyl-tRNA synthetase family. MshC subfamily. Monomer. Zn(2+) serves as cofactor.

The catalysed reaction is 1D-myo-inositol 2-amino-2-deoxy-alpha-D-glucopyranoside + L-cysteine + ATP = 1D-myo-inositol 2-(L-cysteinylamino)-2-deoxy-alpha-D-glucopyranoside + AMP + diphosphate + H(+). Functionally, catalyzes the ATP-dependent condensation of GlcN-Ins and L-cysteine to form L-Cys-GlcN-Ins. In Parafrankia sp. (strain EAN1pec), this protein is L-cysteine:1D-myo-inositol 2-amino-2-deoxy-alpha-D-glucopyranoside ligase.